A 165-amino-acid chain; its full sequence is UPF0178 protein Bphyt_5655 (165 aa).

Disordered stretches follow at residues 115-134 (LRGS…RDSK) and 139-165 (ELDR…PPTE).

This sequence belongs to the UPF0178 family.

The polypeptide is UPF0178 protein Bphyt_5655 (Paraburkholderia phytofirmans (strain DSM 17436 / LMG 22146 / PsJN) (Burkholderia phytofirmans)).